The following is a 171-amino-acid chain: 3-hydroxydecanoyl-[acyl-carrier-protein] dehydratase (171 aa).

Histidine 70 is a catalytic residue.

This sequence belongs to the thioester dehydratase family. FabA subfamily. In terms of assembly, homodimer.

The protein resides in the cytoplasm. It catalyses the reaction a (3R)-hydroxyacyl-[ACP] = a (2E)-enoyl-[ACP] + H2O. The enzyme catalyses (3R)-hydroxydecanoyl-[ACP] = (2E)-decenoyl-[ACP] + H2O. The catalysed reaction is (2E)-decenoyl-[ACP] = (3Z)-decenoyl-[ACP]. It functions in the pathway lipid metabolism; fatty acid biosynthesis. In terms of biological role, necessary for the introduction of cis unsaturation into fatty acids. Catalyzes the dehydration of (3R)-3-hydroxydecanoyl-ACP to E-(2)-decenoyl-ACP and then its isomerization to Z-(3)-decenoyl-ACP. Can catalyze the dehydratase reaction for beta-hydroxyacyl-ACPs with saturated chain lengths up to 16:0, being most active on intermediate chain length. The polypeptide is 3-hydroxydecanoyl-[acyl-carrier-protein] dehydratase (Shewanella oneidensis (strain ATCC 700550 / JCM 31522 / CIP 106686 / LMG 19005 / NCIMB 14063 / MR-1)).